We begin with the raw amino-acid sequence, 632 residues long: tRNA-guanine(15) transglycosylase (632 aa).

The active-site Nucleophile is Asp86. Substrate-binding residues include Asp121 and Gly186. Residues Ala553–Asp628 enclose the PUA domain.

Belongs to the archaeosine tRNA-ribosyltransferase family. Requires Zn(2+) as cofactor.

It catalyses the reaction guanosine(15) in tRNA + 7-cyano-7-deazaguanine = 7-cyano-7-carbaguanosine(15) in tRNA + guanine. Its pathway is tRNA modification; archaeosine-tRNA biosynthesis. In terms of biological role, exchanges the guanine residue with 7-cyano-7-deazaguanine (preQ0) at position 15 in the dihydrouridine loop (D-loop) of archaeal tRNAs. The protein is tRNA-guanine(15) transglycosylase of Thermoplasma acidophilum (strain ATCC 25905 / DSM 1728 / JCM 9062 / NBRC 15155 / AMRC-C165).